The chain runs to 315 residues: Protoheme IX farnesyltransferase (315 aa).

The next 9 helical transmembrane spans lie at valine 34–asparagine 54, proline 55–isoleucine 75, alanine 105–asparagine 125, leucine 127–leucine 147, isoleucine 155–glycine 175, leucine 177–tryptophan 197, tryptophan 226–histidine 246, leucine 251–leucine 271, and tyrosine 294–methionine 314.

This sequence belongs to the UbiA prenyltransferase family. Protoheme IX farnesyltransferase subfamily.

It localises to the cell inner membrane. The catalysed reaction is heme b + (2E,6E)-farnesyl diphosphate + H2O = Fe(II)-heme o + diphosphate. It functions in the pathway porphyrin-containing compound metabolism; heme O biosynthesis; heme O from protoheme: step 1/1. Functionally, converts heme B (protoheme IX) to heme O by substitution of the vinyl group on carbon 2 of heme B porphyrin ring with a hydroxyethyl farnesyl side group. In Gluconacetobacter diazotrophicus (strain ATCC 49037 / DSM 5601 / CCUG 37298 / CIP 103539 / LMG 7603 / PAl5), this protein is Protoheme IX farnesyltransferase.